The chain runs to 345 residues: Sulfate/thiosulfate import ATP-binding protein CysA (345 aa).

In terms of domain architecture, ABC transporter spans 3–237 (IQVSGLCKHF…PRTEFVYQFV (235 aa)). Position 35-42 (35-42 (GPSGCGKT)) interacts with ATP.

It belongs to the ABC transporter superfamily. Sulfate/tungstate importer (TC 3.A.1.6) family. As to quaternary structure, the complex is composed of two ATP-binding proteins (CysA), two transmembrane proteins (CysT and CysW) and a solute-binding protein (CysP).

The protein resides in the cell inner membrane. The enzyme catalyses sulfate(out) + ATP + H2O = sulfate(in) + ADP + phosphate + H(+). The catalysed reaction is thiosulfate(out) + ATP + H2O = thiosulfate(in) + ADP + phosphate + H(+). Part of the ABC transporter complex CysAWTP involved in sulfate/thiosulfate import. Responsible for energy coupling to the transport system. This chain is Sulfate/thiosulfate import ATP-binding protein CysA, found in Vibrio vulnificus (strain CMCP6).